Here is a 175-residue protein sequence, read N- to C-terminus: Ribosome maturation factor RimM (175 aa).

The 80-residue stretch at 96 to 175 folds into the PRC barrel domain; sequence EGDYYWHDLI…TITVDWDAGF (80 aa).

This sequence belongs to the RimM family. As to quaternary structure, binds ribosomal protein uS19.

It is found in the cytoplasm. Its function is as follows. An accessory protein needed during the final step in the assembly of 30S ribosomal subunit, possibly for assembly of the head region. Essential for efficient processing of 16S rRNA. May be needed both before and after RbfA during the maturation of 16S rRNA. It has affinity for free ribosomal 30S subunits but not for 70S ribosomes. The chain is Ribosome maturation factor RimM from Actinobacillus pleuropneumoniae serotype 5b (strain L20).